The primary structure comprises 262 residues: Small ribosomal subunit protein uS2 (262 aa).

This sequence belongs to the universal ribosomal protein uS2 family.

The polypeptide is Small ribosomal subunit protein uS2 (Borreliella afzelii (strain PKo) (Borrelia afzelii)).